Here is a 752-residue protein sequence, read N- to C-terminus: Complement C2 (752 aa).

Positions M1 to S20 are cleaved as a signal peptide. 3 consecutive Sushi domains span residues P22 to P86, V87 to N146, and G149 to Q206. Disulfide bonds link C24-C64, C51-C84, C89-C131, C117-C144, C151-C191, and C177-C204. A glycan (N-linked (GlcNAc...) asparagine) is linked at N29. N112 carries N-linked (GlcNAc...) asparagine glycosylation. The region spanning N254–M452 is the VWFA domain. Positions D260 to S264 match the MIDAS-like motif motif. Mg(2+) contacts are provided by S262 and S264. N-linked (GlcNAc...) asparagine glycans are attached at residues N290 and N333. T337 contributes to the Mg(2+) binding site. 3 disulfides stabilise this stretch: C463–C581, C492–C508, and C584–C600. The 281-residue stretch at G464–G744 folds into the Peptidase S1 domain. N467 and N471 each carry an N-linked (GlcNAc...) asparagine glycan. Active-site charge relay system residues include H507 and D561. N-linked (GlcNAc...) asparagine glycans are attached at residues N621 and N651. Disulfide bonds link C638–C665 and C675–C705. The active-site Charge relay system is S679.

This sequence belongs to the peptidase S1 family. In terms of assembly, serine protease component of the C3 convertase, also named C4bC2b, composed of the serine protease complement C2b and complement C4b. Serine protease component of the C5 convertase, also named C4bC2bC3b, composed of the serine protease complement C2b, complement C3b, as well as complement C4b. Mg(2+) is required as a cofactor. It depends on Mn(2+) as a cofactor. Cleaved and activated by different proteases depending on the complement pathway to generate complement C2a and serine protease complement C2b chains. Cleaved and activated by C1S following activation by the classical complement system. Cleaved and activated by MASP2 following activation by the lectin complement system. Cleaved and activated by GZMK following activation by the GZMK complement system.

It is found in the secreted. The protein localises to the cell surface. The enzyme catalyses Selective cleavage of Arg-|-Ser bond in complement component C3 alpha-chain to form C3a and C3b, and Arg-|-Xaa bond in complement component C5 alpha-chain to form C5a and C5b.. Its function is as follows. Precursor of the catalytic component of the C3 and C5 convertase complexes, which are part of the complement pathway, a cascade of proteins that leads to phagocytosis and breakdown of pathogens and signaling that strengthens the adaptive immune system. Component C2 is part of the classical, lectin and GZMK complement systems. Catalytic component of the complement C3 and C5 convertase complexes. Following complement activation, recruited to the surface of pathogens by complement C4b opsonin to form the C3 convertase, or C3b and C4b opsonins to form the C5 convertase. As part of the C3 convertase, cleaves and activate C3 into C3a anaphylatoxin and C3b opsonin, the next components of the complement pathways. As part of the C5 convertase, cleaves and activate C5 into C5a anaphylatoxin and C5b component of the membrane attack complex. This Gorilla gorilla gorilla (Western lowland gorilla) protein is Complement C2.